The primary structure comprises 938 residues: Isoleucine--tRNA ligase (938 aa).

A 'HIGH' region motif is present at residues 58–68; it reads PYANGSIHIGH. An N6-acetyllysine modification is found at lysine 183. Residue glutamate 561 participates in L-isoleucyl-5'-AMP binding. A 'KMSKS' region motif is present at residues 602–606; it reads KMSKS. Lysine 605 lines the ATP pocket. Positions 901, 904, 921, and 924 each coordinate Zn(2+).

It belongs to the class-I aminoacyl-tRNA synthetase family. IleS type 1 subfamily. Monomer. It depends on Zn(2+) as a cofactor.

Its subcellular location is the cytoplasm. It carries out the reaction tRNA(Ile) + L-isoleucine + ATP = L-isoleucyl-tRNA(Ile) + AMP + diphosphate. Its function is as follows. Catalyzes the attachment of isoleucine to tRNA(Ile). As IleRS can inadvertently accommodate and process structurally similar amino acids such as valine, to avoid such errors it has two additional distinct tRNA(Ile)-dependent editing activities. One activity is designated as 'pretransfer' editing and involves the hydrolysis of activated Val-AMP. The other activity is designated 'posttransfer' editing and involves deacylation of mischarged Val-tRNA(Ile). This is Isoleucine--tRNA ligase from Escherichia coli O6:H1 (strain CFT073 / ATCC 700928 / UPEC).